Consider the following 513-residue polypeptide: MEMAKEQELILVLDFGSQYNQLITRRIREMGVYSELHDHEISIEEIKRMNPKGIILSGGPNSVYEEGSFTIDPEIYNLGIPVLGICYGMQLTTKLLGGKVERANEREYGKATINAKSDELFFGLPSEQTVWMSHSDKVIEIPEGFEVIADSPSTNYAAIEDKKRRIYGVQFHPEVRHTEYGNDLLRNFVRRVCNCTGEWTMENFIEIEIEKIRQQVGNRKVLCAMSGGVDSSVVAVLLHKAIGDQLTCIFVDHGLLRKGEGDMVMEQFGEGFDMNIIRVNAQERFMSKLKGVSDPERKRKIIGNEFVYVFDDEAAKLTDVDFLAQGTLYTDVIESGTKTAQTIKSHHNVGGLPEDMEFELIEPINTLFKDEVRALGIELGIPEHLVWRQPFPGPGLGIRVLGEITEDKLEIVRESDAILREVIREEGLERDIWQYFTVLPGIQSVGVMGDYRTYDHTVGIRAVTSIDGMTSDFARIDWEVLQKISSRIVNEVDHVNRVVYDITSKPPSTIEWE.

Residues 9 to 198 (LILVLDFGSQ…VRRVCNCTGE (190 aa)) form the Glutamine amidotransferase type-1 domain. Cysteine 86 (nucleophile) is an active-site residue. Residues histidine 172 and glutamate 174 contribute to the active site. A GMPS ATP-PPase domain is found at 199 to 388 (WTMENFIEIE…LGIPEHLVWR (190 aa)). 226–232 (SGGVDSS) is an ATP binding site.

Homodimer.

The catalysed reaction is XMP + L-glutamine + ATP + H2O = GMP + L-glutamate + AMP + diphosphate + 2 H(+). It functions in the pathway purine metabolism; GMP biosynthesis; GMP from XMP (L-Gln route): step 1/1. In terms of biological role, catalyzes the synthesis of GMP from XMP. This is GMP synthase [glutamine-hydrolyzing] from Staphylococcus epidermidis (strain ATCC 35984 / DSM 28319 / BCRC 17069 / CCUG 31568 / BM 3577 / RP62A).